The chain runs to 503 residues: Plant-specific TFIIB-related protein 1 (503 aa).

The TFIIB-type zinc-finger motif lies at methionine 1–glutamate 33. 4 disordered regions span residues proline 328–isoleucine 366, asparagine 411–lysine 431, isoleucine 436–serine 455, and glycine 468–phenylalanine 503. Positions proline 333–arginine 346 are enriched in low complexity. Residues phenylalanine 355–isoleucine 366 show a composition bias toward basic and acidic residues.

In terms of processing, ubiquinated. Subsequent degradation by the proteasome pathway. In terms of tissue distribution, widely expressed.

It is found in the plastid. Its subcellular location is the chloroplast outer membrane. The protein resides in the nucleus. In terms of biological role, plant-specific TFIIB-related protein that may be involved in an intracellular signaling pathway between plastids and the nucleus. May act as general transcription factor (GTF) of RNA polymerase I-dependent transcription and rRNA synthesis. Forms a ternary complex with TBP2 and the rDNA promoter region. The protein is Plant-specific TFIIB-related protein 1 of Arabidopsis thaliana (Mouse-ear cress).